We begin with the raw amino-acid sequence, 164 residues long: UPF0262 protein Xaut_1232 (164 aa).

This sequence belongs to the UPF0262 family.

The sequence is that of UPF0262 protein Xaut_1232 from Xanthobacter autotrophicus (strain ATCC BAA-1158 / Py2).